Consider the following 560-residue polypeptide: MTVKPAKAASLARNLAKRRRTYLGGAAGRSQEPEVPCAAVLPGKPGDRNCPEFPPPDRTLGCWATDAAPAAGLCGAGSEPSIAPTSCAGNLPSRPPPLLSPLLASRNPCPWHYLHLSGSHNTLAPTCFKAKLHRKRGSQPPDMASALTDRTSRAPSTYTYTSRPRALPCQRSRYRDSLTQPDEEPMHYGNIMYDRRVIRGNTYALQTGPLLGRPDSLELQRQREARKRALARKQAQEQLRPQTPEPVEGRKHVDVQTELYLEEIADRIIEVDMECQTDAFLDRPPTPLFIPAKTGKDVATQILEGELFDFDLEVKPVLEVLVGKTIEQSLLEVMEEEELANLRASQREYEELRNSERAEVQRLEEQERRHREEKERRKKQQWEIMHKHNETSQKIAARAFAQRYLADLLPSVFGSLRDSGYFYDPIERDIEIGFLPWLMNEVEKTMEYSMVGRTVLDMLIREVVEKRLCMYEHGEDTHQSPEPEDEPGGPGAMTESLEASEFLEQSMSQTRELLLDGGYLQRTTYDRRSSQERKFMEERELLGQDEETAMRKSLGEEELS.

Disordered stretches follow at residues 134-186 (RKRG…EEPM) and 225-249 (ARKR…PVEG). Over residues 153 to 162 (RAPSTYTYTS) the composition is skewed to polar residues. A coiled-coil region spans residues 215-239 (DSLELQRQREARKRALARKQAQEQL). Thr286 carries the phosphothreonine; by MAPK1 modification. The stretch at 331-385 (LEVMEEEELANLRASQREYEELRNSERAEVQRLEEQERRHREEKERRKKQQWEIM) forms a coiled coil. Disordered stretches follow at residues 354–375 (NSER…EEKE), 473–498 (HGED…ESLE), and 526–560 (DRRS…EELS).

Belongs to the flagellar radial spoke RSP3 family. As to quaternary structure, component of the axonemal radial spoke 1 (RS1) and 2 (RS2) complexes, at least composed of spoke head proteins RSPH1, RSPH3, RSPH9 and the cilia-specific component RSPH4A or sperm-specific component RSPH6A, spoke stalk proteins RSPH14, DNAJB13, DYDC1, ROPN1L and NME5, and the RS1 complex-specific anchor protein IQUB. Interacts with IQUB. Interacts with phosphorylated MAPK1. Interacts with MEK1. Interacts with PKA regulatory subunits PRKAR1A and PRKAR1B. Interacts with RSPH1. Interacts with RSPH4A. Interacts with RSPH6A. Interacts with RSPH9. Interacts with LRRC23.

The protein resides in the cytoplasm. Its subcellular location is the cytoskeleton. It is found in the cilium axoneme. The protein localises to the flagellum axoneme. In terms of biological role, functions as part of axonemal radial spoke complexes that play an important part in the motility of sperm and cilia. Functions as a protein kinase A-anchoring protein that scaffolds the cAMP-dependent protein kinase holoenzyme. May serve as a point of convergence for MAPK and PKA signaling in cilia. In Homo sapiens (Human), this protein is Radial spoke head protein 3 homolog (RSPH3).